The chain runs to 664 residues: ATP-dependent RNA helicase MSS116, mitochondrial (664 aa).

Residues 1 to 26 (MLTSILIKGRTPVLASRNLLAALSNC) constitute a mitochondrion transit peptide. A disordered region spans residues 42-79 (NRDQRNFGRNQRNNNSNRYRNSRFNSRPRTRSREDDDE). The span at 48-68 (FGRNQRNNNSNRYRNSRFNSR) shows a compositional bias: low complexity. Residues 106–134 (SLLEEGVLDKEIHKAITRMEFPGLTPVQQ) carry the Q motif motif. The region spanning 139-326 (PILSSEDHDV…NNIMNKKECL (188 aa)) is the Helicase ATP-binding domain. 152-159 (AKTGTGKT) is a binding site for ATP. The DEAD box motif lies at 267–270 (DEAD). In terms of domain architecture, Helicase C-terminal spans 355-512 (SIFAAVEHIK…EKYEPSEEIK (158 aa)). A disordered region spans residues 602–664 (GNNKSYDYDD…NYSSRNSNIY (63 aa)). Positions 628-638 (QNRDYDDEPFR) are enriched in basic and acidic residues. Positions 639 to 649 (RSNNNRRSFSR) are enriched in low complexity. Positions 653–664 (KNNYSSRNSNIY) are enriched in polar residues.

The protein belongs to the DEAD box helicase family. DDX18/HAS1 subfamily.

It is found in the mitochondrion matrix. It catalyses the reaction ATP + H2O = ADP + phosphate + H(+). Its function is as follows. ATP-dependent RNA helicase required for mitochondrial splicing of group I and II introns. Specifically involved in the ATP-dependent splicing of the bl1 intron of COB. Also required for efficient mitochondrial translation. In Saccharomyces cerevisiae (strain ATCC 204508 / S288c) (Baker's yeast), this protein is ATP-dependent RNA helicase MSS116, mitochondrial (MSS116).